A 1415-amino-acid polypeptide reads, in one-letter code: MNQELTTNPFNPVAPVKTFDEIKVSLASPERILSWSFGEIKKPETINYRTFKPERDGLFCARIFGPIKDYECLCGKYKRMKYRGVICEKCGVEVTLQKVRRERMGHIELAAPVAHIWFLKSLPSRIGTMLDMTLRDLERILYFENYVVIEPGLTDLTYGQLMTEEEFLDAQDAYGMDAFTANIGAEAIREMLAAIDLETEAEQLRADLAEATGELKPKKIIKRLKLVENFLESGNRPEWMVLTVVPVIPPELRPLVPLDGGRFATSDLNDLYRRVINRNNRLKRLIELRAPDIIIRNEKRMLQESVDALFDNGRRGRVITGANKRPLKSLSDMLKGKQGRFRQNLLGKRVDFSGRSVIVTGPELKLHQCGLPKKMALELFKPFIYSRLEAKGLSSTVKQAKKLVEKERPEVWDILDEVIREHPVMLNRAPTLHRLGIQAFEPVLIEGKAIQLHPLVCSAFNADFDGDQMAVHVPLSLEAQLEARVLMMSTNNVLSPANGAPIIVPSQDMILGLYYITLEREGLPGQGMIFGSPEEVEHALTAGTVHLHSKIQARVKQIDDEGNEIYKRYETTPGRVRLGALLPLNAKAPFELVNRLLRKKEVQQVIDTVYRYCGQKESVIFCDQIMTLGFREAFKAGISFGKDDMLIPDTKWDIVEGVRDQVKEFEQQYMDGLITQGEKYNKVVDAWSKCSDEVASEMMDEISRDRFDPDTKEQMEPNSVYMMAHSGARGSPAQMKQLGGMRGLMAKPSGEIIETPIISNFKEGLTVLEYFNSTHGARKGLADTALKTANSGYLTRRLVDVAQDCIVRLNDCGTENAITAEAAVNDGEVVASLGERVLGRVAAEDVVDPASGEVIVAKGELIDERKADLIEQSSIQSMRMRSPLTCEADEGVCAQCYGRDLARGTKVNVGEAVGIIAAQSIGEPGTQLTMRTFHIGGIAQGGQQSFQEAGQEGKIAFRNANLLENTSGEKIVMGRNMQLLIVDGEGAERASFKLGYGTKVHVAEGDKVGRGDKLFEWDPYTLPIIAEKSGVVRFADLVSGISVREETDDATGMTQKIVSDWRAAPKGSDLKPEVLIADPETGEPVRNDAGNPVTYPMSVDAILSIEDGMPISAGDVVARIPREGAKTKDITGGLPRVAELFEARRPKDHAIIAEIDGYVRFGRDYKNKRRISIEPSDETMEPVEYMVPKGKHIPVAEGDFVQKGDYIMDGNPAPHDILRIMGIEALADYLINEVQDVYRLQGVKINDKHIEVIVRQMLQKWEILDSGETTLLKGEHVDKLQFEAVNEKAIAEGRRPAQGEPILLGITKASLQTRSFISAASFQETTKVLTEASTMGKRDKLIGLKENVIVGRLIPAGTGGATQQMRRIAQERDQKVIEQRQAEAEEAAALAAPMAEDVFEDGGDMADISMPESRD.

Residues Cys72, Cys74, Cys87, and Cys90 each contribute to the Zn(2+) site. Asp463, Asp465, and Asp467 together coordinate Mg(2+). 4 residues coordinate Zn(2+): Cys812, Cys886, Cys893, and Cys896.

Belongs to the RNA polymerase beta' chain family. The RNAP catalytic core consists of 2 alpha, 1 beta, 1 beta' and 1 omega subunit. When a sigma factor is associated with the core the holoenzyme is formed, which can initiate transcription. Mg(2+) serves as cofactor. Zn(2+) is required as a cofactor.

The catalysed reaction is RNA(n) + a ribonucleoside 5'-triphosphate = RNA(n+1) + diphosphate. DNA-dependent RNA polymerase catalyzes the transcription of DNA into RNA using the four ribonucleoside triphosphates as substrates. The protein is DNA-directed RNA polymerase subunit beta' of Dinoroseobacter shibae (strain DSM 16493 / NCIMB 14021 / DFL 12).